Reading from the N-terminus, the 382-residue chain is Lycopene beta-cyclase (382 aa).

6–36 contributes to the NAD(+) binding site; sequence DLILVGAGLANGLIALRLQQQQPDMRILLID.

It belongs to the lycopene cyclase family. The cofactor is FAD.

It is found in the cell inner membrane. The catalysed reaction is a carotenoid psi-end group = a carotenoid beta-end derivative. The enzyme catalyses all-trans-lycopene = gamma-carotene. It catalyses the reaction gamma-carotene = all-trans-beta-carotene. It carries out the reaction all-trans-neurosporene = beta-zeacarotene. The catalysed reaction is beta-zeacarotene = 7,8-dihydro-beta-carotene. The protein operates within carotenoid biosynthesis; beta-carotene biosynthesis. With respect to regulation, activity is increased in the presence of NAD(P)H. NADPH is not involved directly in the cyclization reaction, but must play an indirect role, e.g. as an allosteric activator. Functionally, catalyzes the double cyclization reaction which converts lycopene to beta-carotene. Also catalyzes the double cyclization reaction which converts neurosporene to 7,8-dihydro-beta-carotene via monocyclic beta-zeacarotene. May also convert zeta-carotene to bicyclic 7,8,7',8'-tetrahydro-beta-carotene. This is Lycopene beta-cyclase from Pantoea ananas (Erwinia uredovora).